The following is a 248-amino-acid chain: Clathrin light chain A (248 aa).

Residues 1–92 (MAELDPFGAP…YYQESNGPTD (92 aa)) form a disordered region. Residues 13–25 (APGGPALGNGVAG) are compositionally biased toward gly residues. Residues 61 to 71 (GPQPHGEPPGG) show a composition bias toward pro residues. Residues 100 to 162 (VDRLQSEPES…QLQKTKANNR (63 aa)) form an involved in binding clathrin heavy chain region. Serine 105 and serine 206 each carry phosphoserine. At lysine 223 the chain carries N6-acetyllysine. Serine 236 is modified (phosphoserine). Lysine 242 is subject to N6-acetyllysine.

This sequence belongs to the clathrin light chain family. Clathrin coats are formed from molecules containing 3 heavy chains and 3 light chains. Interacts with CALY; the interaction stimulates clathrin self-assembly and clathrin-mediated endocytosis. Interacts with CKAP5 and TACC3 forming the TACC3/ch-TOG/clathrin complex located at spindle inter-microtubules bridges; the complex implicates clathrin triskelions.

The protein localises to the cytoplasmic vesicle membrane. Its subcellular location is the membrane. It localises to the coated pit. The protein resides in the cytoplasm. It is found in the cytoskeleton. The protein localises to the spindle. In terms of biological role, clathrin is the major protein of the polyhedral coat of coated pits and vesicles. Acts as a component of the TACC3/ch-TOG/clathrin complex proposed to contribute to stabilization of kinetochore fibers of the mitotic spindle by acting as inter-microtubule bridge. This Homo sapiens (Human) protein is Clathrin light chain A (CLTA).